Reading from the N-terminus, the 54-residue chain is UPF0391 membrane protein Rfer_1875 (54 aa).

The next 2 membrane-spanning stretches (helical) occupy residues 5-25 (AVVF…GIAA) and 30-50 (IGKI…LFGL).

It belongs to the UPF0391 family.

The protein resides in the cell membrane. The polypeptide is UPF0391 membrane protein Rfer_1875 (Albidiferax ferrireducens (strain ATCC BAA-621 / DSM 15236 / T118) (Rhodoferax ferrireducens)).